A 337-amino-acid chain; its full sequence is MAKGHRPRRGSLAYSPRKRSQSHIPRFRSWPESDAEPKLQGFAGYKVGMTHVIMIDDVKHSLTEGTEISVPVTIIETPAIRVAAIRAYGKDTYGEIAIAEAWTDVLDKDLSRRLKTAKNPDVNASLEKLETLVESGRANDIRLITYTLPSTLTGVPKKVPDVMETGVSGSDVKAKFEYAKTVLGTMVEISDVFDNGKIVDVAAITTGHGTQGPVKRWGINLMKNKHSRQGSLRQVGTLGPWTPAHVSWRVPQAGQMGYHQRTDYNKRILKMSSDVDEVNPAGGFVNYGLVRGNYILIKGSVPGPSKRLIRLREPTRSKVSSIGEPQIMHVSTQTLQG.

A disordered region spans residues Met1–Glu32.

This sequence belongs to the universal ribosomal protein uL3 family. Part of the 50S ribosomal subunit. Forms a cluster with proteins L14 and L24e.

In terms of biological role, one of the primary rRNA binding proteins, it binds directly near the 3'-end of the 23S rRNA, where it nucleates assembly of the 50S subunit. The protein is Large ribosomal subunit protein uL3 of Methanococcoides burtonii (strain DSM 6242 / NBRC 107633 / OCM 468 / ACE-M).